The sequence spans 283 residues: ATP phosphoribosyltransferase (283 aa).

The protein belongs to the ATP phosphoribosyltransferase family. Long subfamily. Requires Mg(2+) as cofactor.

It is found in the cytoplasm. It carries out the reaction 1-(5-phospho-beta-D-ribosyl)-ATP + diphosphate = 5-phospho-alpha-D-ribose 1-diphosphate + ATP. It participates in amino-acid biosynthesis; L-histidine biosynthesis; L-histidine from 5-phospho-alpha-D-ribose 1-diphosphate: step 1/9. With respect to regulation, feedback inhibited by histidine. Its function is as follows. Catalyzes the condensation of ATP and 5-phosphoribose 1-diphosphate to form N'-(5'-phosphoribosyl)-ATP (PR-ATP). Has a crucial role in the pathway because the rate of histidine biosynthesis seems to be controlled primarily by regulation of HisG enzymatic activity. This chain is ATP phosphoribosyltransferase, found in Methanopyrus kandleri (strain AV19 / DSM 6324 / JCM 9639 / NBRC 100938).